The sequence spans 312 residues: Glyoxylate/hydroxypyruvate reductase A (312 aa).

R227 is a catalytic residue. H275 functions as the Proton donor in the catalytic mechanism.

The protein belongs to the D-isomer specific 2-hydroxyacid dehydrogenase family. GhrA subfamily.

It localises to the cytoplasm. It catalyses the reaction glycolate + NADP(+) = glyoxylate + NADPH + H(+). The catalysed reaction is (R)-glycerate + NAD(+) = 3-hydroxypyruvate + NADH + H(+). It carries out the reaction (R)-glycerate + NADP(+) = 3-hydroxypyruvate + NADPH + H(+). Its function is as follows. Catalyzes the NADPH-dependent reduction of glyoxylate and hydroxypyruvate into glycolate and glycerate, respectively. This chain is Glyoxylate/hydroxypyruvate reductase A, found in Escherichia fergusonii (strain ATCC 35469 / DSM 13698 / CCUG 18766 / IAM 14443 / JCM 21226 / LMG 7866 / NBRC 102419 / NCTC 12128 / CDC 0568-73).